The primary structure comprises 206 residues: Large ribosomal subunit protein uL3 (206 aa).

Residues 122–154 (VVKRHGHAGGPGGHGSRFHRHPGSMGANSTPSR) form a disordered region.

This sequence belongs to the universal ribosomal protein uL3 family. As to quaternary structure, part of the 50S ribosomal subunit. Forms a cluster with proteins L14 and L19.

In terms of biological role, one of the primary rRNA binding proteins, it binds directly near the 3'-end of the 23S rRNA, where it nucleates assembly of the 50S subunit. This Leptospira borgpetersenii serovar Hardjo-bovis (strain JB197) protein is Large ribosomal subunit protein uL3.